The chain runs to 346 residues: Probable galacturonosyltransferase-like 6 (346 aa).

The chain crosses the membrane as a helical; Signal-anchor for type II membrane protein span at residues methionine 1–serine 21. Over proline 22–histidine 346 the chain is Lumenal. Residue asparagine 203 is glycosylated (N-linked (GlcNAc...) asparagine).

It belongs to the glycosyltransferase 8 family.

It localises to the golgi apparatus membrane. It participates in glycan metabolism; pectin biosynthesis. In terms of biological role, may be involved in pectin and/or xylans biosynthesis in cell walls. The chain is Probable galacturonosyltransferase-like 6 (GATL6) from Arabidopsis thaliana (Mouse-ear cress).